A 293-amino-acid polypeptide reads, in one-letter code: 33 kDa chaperonin (293 aa).

2 disulfide bridges follow: cysteine 236/cysteine 238 and cysteine 269/cysteine 272.

Belongs to the HSP33 family. Under oxidizing conditions two disulfide bonds are formed involving the reactive cysteines. Under reducing conditions zinc is bound to the reactive cysteines and the protein is inactive.

The protein resides in the cytoplasm. Its function is as follows. Redox regulated molecular chaperone. Protects both thermally unfolding and oxidatively damaged proteins from irreversible aggregation. Plays an important role in the bacterial defense system toward oxidative stress. This is 33 kDa chaperonin from Lactobacillus delbrueckii subsp. bulgaricus (strain ATCC 11842 / DSM 20081 / BCRC 10696 / JCM 1002 / NBRC 13953 / NCIMB 11778 / NCTC 12712 / WDCM 00102 / Lb 14).